Consider the following 324-residue polypeptide: UPF0158 protein CPn_0518/CP_0235/CPj0518/CpB0539 (324 aa).

It belongs to the UPF0158 family.

The sequence is that of UPF0158 protein CPn_0518/CP_0235/CPj0518/CpB0539 from Chlamydia pneumoniae (Chlamydophila pneumoniae).